A 196-amino-acid chain; its full sequence is Small nuclear ribonucleoprotein-associated protein B (196 aa).

One can recognise a Sm domain in the interval 7-101 (AHSSRLANLI…ILSTVVEDKP (95 aa)). The Nuclear localization signal signature appears at 105–132 (KKERLVRDKKEKKQAQKQTKLRKEKEKK). Over residues 108 to 118 (RLVRDKKEKKQ) the composition is skewed to basic and acidic residues. The segment at 108 to 196 (RLVRDKKEKK…FQPPPGFKRK (89 aa)) is disordered. The segment covering 140-181 (NTANAKHTSSNSREIAQPSSSRYNGGNDNIGANRSRFNNEAP) has biased composition (polar residues).

This sequence belongs to the snRNP SmB/SmN family. As to quaternary structure, component of the Sm core complex, present in spliceosomal snRNP U1, U2, U4/U6 and U5. The core complex contains SMB1, SMD1, SMD2, SMD3, SME1, SMX3 and SMX2 (Sm proteins B, D1, D2, D3, E, F and G, respectively), and is probably a heptameric ring structure. SMB1 specifically interacts with SMD3. Belongs to the CWC complex (or CEF1-associated complex), a spliceosome sub-complex reminiscent of a late-stage spliceosome composed of the U2, U5 and U6 snRNAs and at least BUD13, BUD31, BRR2, CDC40, CEF1, CLF1, CUS1, CWC2, CWC15, CWC21, CWC22, CWC23, CWC24, CWC25, CWC27, ECM2, HSH155, IST3, ISY1, LEA1, MSL1, NTC20, PRP8, PRP9, PRP11, PRP19, PRP21, PRP22, PRP45, PRP46, SLU7, SMB1, SMD1, SMD2, SMD3, SMX2, SMX3, SNT309, SNU114, SPP2, SYF1, SYF2, RSE1 and YJU2. Component of the U4/U6-U5 tri-snRNP complex composed of the U4, U6 and U5 snRNAs and at least PRP3, PRP4, PRP6, PRP8, PRP18, PRP38, SNU13, SNU23, SNU66, SNU114, SPP381, SMB1, SMD1, SMD2, SMD3, SMX2, SMX3, LSM2, LSM3, LSM4, LSM5, LSM6, LSM7, LSM8, BRR2 and DIB1. Interacts with the trimethylguanosine synthase TGS1.

Its subcellular location is the nucleus. The protein resides in the cytoplasm. Its function is as follows. Plays a role in pre-mRNA splicing as a core component of the spliceosomal U1, U2, U4 and U5 small nuclear ribonucleoproteins (snRNPs), the building blocks of the spliceosome. The polypeptide is Small nuclear ribonucleoprotein-associated protein B (SMB1) (Saccharomyces cerevisiae (strain ATCC 204508 / S288c) (Baker's yeast)).